A 134-amino-acid chain; its full sequence is Small ribosomal subunit protein uS8c (134 aa).

Belongs to the universal ribosomal protein uS8 family. As to quaternary structure, part of the 30S ribosomal subunit.

It is found in the plastid. The protein localises to the chloroplast. Functionally, one of the primary rRNA binding proteins, it binds directly to 16S rRNA central domain where it helps coordinate assembly of the platform of the 30S subunit. This chain is Small ribosomal subunit protein uS8c (rps8), found in Arabis hirsuta (Hairy rock-cress).